The sequence spans 200 residues: Phospholipase D (200 aa).

The signal sequence occupies residues 1–25; sequence MKRKNNKFIEISIAFILGIALGLYG. A PLD phosphodiesterase domain is found at 142–169; that stretch reads VPGIAHNKVIIIDKKKVITGSFNFTAAA. Catalysis depends on residues His-147, Lys-149, and Asp-154.

The protein belongs to the phospholipase D family. Homodimer.

It is found in the secreted. It carries out the reaction a 1,2-diacyl-sn-glycero-3-phosphocholine + H2O = a 1,2-diacyl-sn-glycero-3-phosphate + choline + H(+). Could be a virulence factor. The polypeptide is Phospholipase D (pld) (Rickettsia conorii (strain ATCC VR-613 / Malish 7)).